We begin with the raw amino-acid sequence, 392 residues long: Protein O-glucosyltransferase 1 (392 aa).

The first 23 residues, 1–23 (MELGVSSQLWLWLLLLLLPPVPG), serve as a signal peptide directing secretion. 4 cysteine pairs are disulfide-bonded: C49–C56, C54–C357, C102–C108, and C263–C286. N-linked (GlcNAc...) asparagine glycosylation is present at N53. Residues 103–107 (MFPSR) form an interaction with the consensus sequence C-X-S-X-[PA]-C in peptide substrates region. Residue D133 is the Proton donor/acceptor of the active site. Positions 172 to 178 (AVWPIYP) are interaction with the consensus sequence C-X-S-X-[PA]-C in peptide substrates. UDP-alpha-D-glucose is bound at residue Y177. N-linked (GlcNAc...) asparagine glycosylation is present at N204. UDP-alpha-D-glucose-binding positions include S212, R218, and 274–279 (VAASFR). N373 carries an N-linked (GlcNAc...) asparagine glycan. Residues 389–392 (KIEL) carry the Prevents secretion from ER motif.

This sequence belongs to the glycosyltransferase 90 family.

Its subcellular location is the endoplasmic reticulum lumen. The catalysed reaction is L-seryl-[EGF-like domain protein] + UDP-alpha-D-xylose = 3-O-(beta-D-xylosyl)-L-seryl-[EGF-like domain protein] + UDP + H(+). It catalyses the reaction L-seryl-[EGF-like domain protein] + UDP-alpha-D-glucose = 3-O-(beta-D-glucosyl)-L-seryl-[EGF-like domain protein] + UDP + H(+). It participates in protein modification; protein glycosylation. Its function is as follows. Dual specificity glycosyltransferase that catalyzes the transfer of glucose and xylose from UDP-glucose and UDP-xylose, respectively, to a serine residue found in the consensus sequence of C-X-S-X-P-C. Specifically targets extracellular EGF repeats of protein such as CRB2, F7, F9 and NOTCH2. Acts as a positive regulator of Notch signaling by mediating O-glucosylation of Notch, leading to regulate muscle development. Notch glucosylation does not affect Notch ligand binding. Required during early development to promote gastrulation: acts by mediating O-glucosylation of CRB2, which is required for CRB2 localization to the cell membrane. In Bos taurus (Bovine), this protein is Protein O-glucosyltransferase 1 (POGLUT1).